We begin with the raw amino-acid sequence, 304 residues long: Protein ML (304 aa).

In terms of biological role, blocks host IRF3 and IRF7, thereby inhibiting IFN-beta expression and activation of host antiviral state. This chain is Protein ML, found in Thogoto virus (isolate SiAr 126) (Tho).